Reading from the N-terminus, the 192-residue chain is Elongation factor P (192 aa).

This sequence belongs to the elongation factor P family.

The protein localises to the cytoplasm. It participates in protein biosynthesis; polypeptide chain elongation. Involved in peptide bond synthesis. Stimulates efficient translation and peptide-bond synthesis on native or reconstituted 70S ribosomes in vitro. Probably functions indirectly by altering the affinity of the ribosome for aminoacyl-tRNA, thus increasing their reactivity as acceptors for peptidyl transferase. This chain is Elongation factor P, found in Borrelia duttonii (strain Ly).